The sequence spans 317 residues: Serpentine receptor class delta-46 (317 aa).

7 consecutive transmembrane segments (helical) span residues 9–29, 42–62, 91–111, 129–149, 185–205, 239–259, and 269–289; these read FYII…YVII, IFLC…LLQA, YVLC…TMYV, VIIL…YLTI, QIVF…MFCL, AFLP…ALIT, and FVSV…FYTV.

Belongs to the nematode receptor-like protein srd family.

The protein resides in the membrane. This Caenorhabditis elegans protein is Serpentine receptor class delta-46 (srd-46).